A 4034-amino-acid polypeptide reads, in one-letter code: Polyketide synthase-nonribosomal peptide synthetase ACE1 (4034 aa).

The Ketosynthase family 3 (KS3) domain maps to 10 to 448; it reads TEPIAIIGSG…GANAHVILES (439 aa). Residues C183, H322, and H368 each act as for beta-ketoacyl synthase activity in the active site. Residues 560–879 form an acyl transferase region; it reads VFTGQGAQWA…PYFGCLSRGT (320 aa). Residues 951 to 1082 are N-terminal hotdog fold; it reads NELLGTRLPD…GDLVVLLGEP (132 aa). One can recognise a PKS/mFAS DH domain in the interval 951–1257; that stretch reads NELLGTRLPD…TKPLSPPSAA (307 aa). Residues 952-1252 are dehydratase (DH) domain; the sequence is ELLGTRLPDD…LQGLHTKPLS (301 aa). H983 acts as the Proton acceptor; for dehydratase activity in catalysis. The C-terminal hotdog fold stretch occupies residues 1097-1257; that stretch reads MKDIDEERFY…TKPLSPPSAA (161 aa). D1157 serves as the catalytic Proton donor; for dehydratase activity. The methyltransferase (MT) domain stretch occupies residues 1396 to 1594; it reads NMLNRFYSDA…SGADIVTPHH (199 aa). Positions 2144–2317 are ketoreductase (KR)domain; sequence TYWLVGLTGG…AGSSVEIGCI (174 aa). The 82-residue stretch at 2424 to 2505 folds into the Carrier 1 domain; sequence KSSEEVLDIL…LLLEFVQGLI (82 aa). Residue S2465 is modified to O-(pantetheine 4'-phosphoryl)serine. The segment at 2512–2598 is disordered; that stretch reads KLDGSDGADA…SPTTSASMAS (87 aa). Low complexity predominate over residues 2556–2577; the sequence is PSGPASPTSPSSATASPGRSRS. A compositionally biased stretch (polar residues) spans 2586-2598; the sequence is TPVSPTTSASMAS. The segment at 2608 to 3037 is condensation; the sequence is TVPVSFGQSR…ATSLNRPAIY (430 aa). The tract at residues 3073-3473 is adenylation; sequence KYATKFALRN…GGLIIEGRID (401 aa). In terms of domain architecture, Carrier 2 spans 3598–3678; sequence AELGSDQARM…AMTDLVLSDD (81 aa). O-(pantetheine 4'-phosphoryl)serine is present on S3638. The tract at residues 3719–3944 is reductase-like; that stretch reads LTGATGFLGR…DFVSVENVAA (226 aa).

This sequence belongs to the NRP synthetase family.

Its subcellular location is the cytoplasm. It functions in the pathway secondary metabolite biosynthesis. Hybrid PKS-NRPS synthetase; part of the gene cluster that mediates the biosynthesis of a tyrosine-derived cytochalasan acting as a fungal signal recognized by resistant rice plants and leads to avirulence in Pi33 resistant rice cultivars. The first step in the pathway is catalyzed by the hybrid PKS-NRPS ACE1, assisted by the enoyl reductase RAP1, that are responsible for fusion of the tyrosine precursor and the polyketide backbone. The polyketide synthase module (PKS) of ACE1 is responsible for the synthesis of the polyketide backbone and the downstream nonribosomal peptide synthetase (NRPS) amidates the carboxyl end of the polyketide with the tyrosine precursor. Because ACE1 lacks a designated enoylreductase (ER) domain, the required activity is provided the enoyl reductase RAP1. Reduction by the hydrolyase ORFZ, followed by dehydration and intra-molecular Diels-Alder cyclization by the Diels-Alderase ORF3 then yield the required isoindolone-fused macrocycle. A number of oxidative steps catalyzed by the tailoring enzymes identified within the cluster, including cytochrome P450 monooxygenases CYP1 to CYP4, the FAD-linked oxidoreductase OXR2 and the short-chain dehydrogenase/reductase OXR1, are further required to afford the final cytochalasans that confer avirulence and which have still to be identified. The monooxygenase CYP1 has been shown to be a site-selective C-18 hydroxylase whereas the function of CYP3 is the site-selective epoxidation of the C-6/C-7 olefin that is present in some intermediate compounds. Finally, SYN2 and RAP2 are not required for avirulence in Pi33 resistant rice cultivars. This Pyricularia oryzae (strain 70-15 / ATCC MYA-4617 / FGSC 8958) (Rice blast fungus) protein is Polyketide synthase-nonribosomal peptide synthetase ACE1.